The chain runs to 515 residues: N-acetylglucosamine-1-phosphodiester alpha-N-acetylglucosaminidase (515 aa).

The N-terminal stretch at 1 to 25 is a signal peptide; that stretch reads MATSTGRWLLLRLALFGFLWEASGG. The propeptide at 26–49 is removed in mature form; it reads LDSGASRDDDLLLPYPRARARLPR. The Lumenal segment spans residues 50–448; sequence DCTRVRAGNR…AGELSFFTRT (399 aa). Cystine bridges form between C115/C148, C132/C323, C307/C314, C362/C373, and C380/C389. 3 N-linked (GlcNAc...) asparagine glycosylation sites follow: N208, N214, and N296. Residues 358–390 enclose the EGF-like domain; sequence DELDCGPSNCSQHGLCTETGCRCDAGWTGSNCS. Residues N366, N388, and N420 are each glycosylated (N-linked (GlcNAc...) asparagine). Residues 449–469 form a helical membrane-spanning segment; the sequence is AWLALTLALAFLLLISTAANL. Residues 470-515 are Cytoplasmic-facing; the sequence is SLLLSRAERNRRLHGDYAYHPLQEMNGEPLAAEKEQPGGAHNPFKD. The segment at 486–493 is mediates the interaction with AP4M1; sequence YAYHPLQE. The Tyrosine-based internalization motif signature appears at 488–491; it reads YHPL. The short motif at 511–515 is the NPF internalization motif element; it reads NPFKD.

In terms of assembly, homotetramer arranged as two disulfide-linked homodimers. Interacts with AP4M1. The precursor is cleaved and activated in the trans-Golgi network by a furin endopeptidase. As to expression, isoform 2 may be brain-specific.

It is found in the golgi apparatus. The protein localises to the golgi stack membrane. The protein resides in the trans-Golgi network. It carries out the reaction N(4)-[6-(N-acetyl-alpha-D-glucosaminyl-1-phospho)-alpha-D-mannosyl-(1-&gt;2)-alpha-D-mannosyl-(glycan)]-L-asparaginyl-[protein] + H2O = N(4)-[6-phospho-alpha-D-mannosyl-(1-&gt;2)-alpha-D-mannosyl-(glycan)]-L-asparaginyl-[protein] + N-acetyl-D-glucosamine + H(+). It functions in the pathway protein modification; protein glycosylation. Functionally, catalyzes the second step in the formation of the mannose 6-phosphate targeting signal on lysosomal enzyme oligosaccharides by removing GlcNAc residues from GlcNAc-alpha-P-mannose moieties, which are formed in the first step. Also hydrolyzes UDP-GlcNAc, a sugar donor for Golgi N-acetylglucosaminyltransferases. The chain is N-acetylglucosamine-1-phosphodiester alpha-N-acetylglucosaminidase (NAGPA) from Homo sapiens (Human).